A 368-amino-acid polypeptide reads, in one-letter code: Probable endopolygalacturonase I (368 aa).

The signal sequence occupies residues 1–18 (MRSVEILGLAALGSLVAA). Residues 19 to 31 (APSPSRVSNSAKK) constitute a propeptide that is removed on maturation. Residues Cys-35 and Cys-50 are joined by a disulfide bond. 2 PbH1 repeats span residues 162 to 192 (ATNLQLTDITIDNSDGDENGGHNTDAFDIGE) and 193 to 214 (SNGVYIRGAVVKNQDDCIAINS). Asp-207 acts as the Proton donor in catalysis. A disulfide bridge connects residues Cys-209 and Cys-225. His-229 is a catalytic residue. PbH1 repeat units follow at residues 244–265 (VKNVTITDSTISDSDNGVRIKT), 273–295 (VGDVTYSNIKLSNIAKYGIVIEQ), and 307–328 (TTGVPITGLTIDGITGSVASNA). N-linked (GlcNAc...) asparagine glycosylation occurs at Asn-246. Disulfide bonds link Cys-335–Cys-340 and Cys-359–Cys-368.

Belongs to the glycosyl hydrolase 28 family.

The protein localises to the secreted. The enzyme catalyses (1,4-alpha-D-galacturonosyl)n+m + H2O = (1,4-alpha-D-galacturonosyl)n + (1,4-alpha-D-galacturonosyl)m.. Functionally, involved in maceration and soft-rotting of plant tissue. Hydrolyzes the 1,4-alpha glycosidic bonds of de-esterified pectate in the smooth region of the plant cell wall. This Aspergillus clavatus (strain ATCC 1007 / CBS 513.65 / DSM 816 / NCTC 3887 / NRRL 1 / QM 1276 / 107) protein is Probable endopolygalacturonase I (pgaI).